Consider the following 81-residue polypeptide: Putative membrane protein insertion efficiency factor (81 aa).

Belongs to the UPF0161 family.

It is found in the cell inner membrane. Could be involved in insertion of integral membrane proteins into the membrane. The chain is Putative membrane protein insertion efficiency factor from Pseudomonas savastanoi pv. phaseolicola (strain 1448A / Race 6) (Pseudomonas syringae pv. phaseolicola (strain 1448A / Race 6)).